Consider the following 1275-residue polypeptide: Surfactin synthase subunit 3 (1275 aa).

Positions 968–1043 constitute a Carrier domain; it reads GPRNEMEETI…GISAYLKNGG (76 aa). Position 1003 is an O-(pantetheine 4'-phosphoryl)serine (Ser-1003). The interval 1059–1271 is thioesterase; the sequence is QIIFAFPPVL…ILLEFLNTQT (213 aa). Catalysis depends on residues Ser-1120, Asp-1147, and His-1247.

The protein belongs to the ATP-dependent AMP-binding enzyme family. It depends on pantetheine 4'-phosphate as a cofactor.

Its pathway is antibiotic biosynthesis; surfactin biosynthesis. Its function is as follows. Probably activates a leucine. The sequence is that of Surfactin synthase subunit 3 (srfAC) from Bacillus subtilis (strain 168).